The primary structure comprises 2364 residues: Cytotoxin-L (2364 aa).

A four-helical bundle region spans residues 1–91 (MNLVNKAQLQ…EVLELKNNSL (91 aa)). The GT44 domain maps to 96 to 468 (KNLHFIWIGG…APDVRSTINL (373 aa)). The interval 96–468 (KNLHFIWIGG…APDVRSTINL (373 aa)) is glucosyltransferase region. Residues 101–103 (IWI), Asn-139, 265–270 (LAAASD), and 286–288 (DVD) each bind UDP-alpha-D-glucose. Residues Asp-288, Glu-515, and Ser-518 each coordinate Mg(2+). Position 518–520 (518–520 (SLW)) interacts with UDP-alpha-D-glucose. The interval 544 to 799 (GEDDNLDFAQ…KSKYLHELST (256 aa)) is autoprocessing region. 2 residues coordinate Zn(2+): Glu-545 and Asp-546. A Peptidase C80 domain is found at 567–774 (LSSMKTRNKE…EESIIKDISS (208 aa)). Residues Tyr-577, Lys-600, and Lys-647 each contribute to the 1D-myo-inositol hexakisphosphate site. Position 653 (His-653) interacts with Zn(2+). Catalysis depends on His-653, which acts as the For protease activity. The active-site Nucleophile; for protease activity is Cys-698. His-757 is a binding site for Zn(2+). The 1D-myo-inositol hexakisphosphate site is built by Lys-764, Lys-775, and Lys-792. The segment at 800-1500 (LLQEIRNNAN…ESIIRNIYMP (701 aa)) is translocation region. Interaction with host SEMA6A and SEMA6B stretches follow at residues 1433–1438 (CMKLIE), 1466–1471 (DNETKY), 1484–1495 (FTAEFSNESIIR), 1504–1511 (NLFIYSSK), and 1596–1601 (YNNLDP). 20 Cell wall-binding repeats span residues 1813–1832 (EFGL…FGNM), 1833–1852 (VSGL…PKNN), 1854–1873 (ITGF…TKSG), 1876–1895 (SIGE…QGIL), 1926–1945 (FIGK…NYRA), 1946–1965 (AVEW…KTGE), 1967–1986 (LKGL…NGIM), 1987–2006 (QTGF…DGVM), 2007–2026 (QVGY…NGER), 2057–2076 (YNGI…SNTA), 2077–2097 (VVGW…NTAE), 2099–2118 (CIGL…NGIR), 2119–2138 (QLGF…SGKI), 2139–2158 (ELGY…SGLV), 2209–2224 (ETGW…YFDP), 2227–2249 (KKAY…NGIM), 2250–2269 (RTGL…DGKM), 2270–2289 (QFGY…DGKM), 2320–2339 (YTGW…EYIA), and 2340–2359 (ATGS…DTAE). Residues 1835–2364 (GLIYINDSLY…PDTAELVVSE (530 aa)) are receptor-binding (CROPS) region.

This sequence belongs to the clostridial glucosylating toxin (LCGT) family. Homomultimer; forms an inactive homomultimer at pH 8, which dissociates at pH 4, leading to cytotoxicity. Interacts with host SEMA6A; interaction promotes toxin entry into host cell. Interacts with host SEMA6B; interaction promotes toxin entry into host cell. It depends on Zn(2+) as a cofactor. Requires Mn(2+) as cofactor. Mg(2+) is required as a cofactor. In terms of processing, undergoes autocatalytic cleavage to release the N-terminal part (Glucosyltransferase TcsL), which constitutes the active part of the toxin, in the host cytosol. 1D-myo-inositol hexakisphosphate-binding (InsP6) activates the peptidase C80 domain and promotes autoprocessing.

Its subcellular location is the secreted. It is found in the host endosome membrane. The protein localises to the host cytoplasm. The protein resides in the host cytosol. It localises to the host cell membrane. The enzyme catalyses L-threonyl-[protein] + UDP-alpha-D-glucose = 3-O-(alpha-D-glucosyl)-L-threonyl-[protein] + UDP + H(+). With respect to regulation, protease activity is activated upon binding to 1D-myo-inositol hexakisphosphate (InsP6), which induces conformational reorganization. Precursor of a cytotoxin that targets the vascular endothelium, inducing an anti-inflammatory effect and resulting in lethal toxic shock syndrome. TcsL constitutes the main toxin that mediates the pathology of P.sordellii infection, an anaerobic Gram-positive bacterium found in soil and in the gastrointestinal and vaginal tracts of animals and humans; although the majority of carriers are asymptomatic, pathogenic P.sordellii infections arise rapidly and are highly lethal. This form constitutes the precursor of the toxin: it enters into host cells and mediates autoprocessing to release the active toxin (Glucosyltransferase TcsL) into the host cytosol. Targets vascular endothelium by binding to the semaphorin proteins SEMA6A and SEMA6B, and enters host cells via clathrin-mediated endocytosis. Once entered into host cells, acidification in the endosome promotes the membrane insertion of the translocation region and formation of a pore, leading to translocation of the GT44 and peptidase C80 domains across the endosomal membrane. This activates the peptidase C80 domain and autocatalytic processing, releasing the N-terminal part (Glucosyltransferase TcsL), which constitutes the active part of the toxin, in the cytosol. In terms of biological role, active form of the toxin, which is released into the host cytosol following autoprocessing and inactivates small GTPases. Acts by mediating monoglucosylation of small GTPases of the Ras (H-Ras/HRAS, K-Ras/KRAS and N-Ras/NRAS) family in host cells at the conserved threonine residue located in the switch I region ('Thr-37/35'), using UDP-alpha-D-glucose as the sugar donor. Also able to catalyze monoglucosylation of some members of the Rho family (Rac1 and Rap2A), but with less efficiency than with Ras proteins. Monoglucosylation of host small GTPases completely prevents the recognition of the downstream effector, blocking the GTPases in their inactive form and leading to apoptosis. Induces an anti-inflammatory effect, mainly by inactivating Ras proteins which results in blockage of the cell cycle and killing of immune cells. The absence or moderate local inflammatory response allows C.sordellii spreading in deep tissues, production of toxin which is released in the general circulation and causes a toxic shock syndrome. The protein is Cytotoxin-L of Paraclostridium sordellii (strain ATCC 9714 / DSM 2141 / JCM 3814 / LMG 15708 / NCIMB 10717 / 211) (Clostridium sordellii).